The chain runs to 267 residues: 4-hydroxy-tetrahydrodipicolinate reductase (267 aa).

Residues 8 to 13 (GAAGRM) and Asp-34 each bind NAD(+). Arg-35 contributes to the NADP(+) binding site. Residues 98 to 100 (GTT) and 122 to 125 (AANF) each bind NAD(+). Catalysis depends on His-155, which acts as the Proton donor/acceptor. Residue His-156 coordinates (S)-2,3,4,5-tetrahydrodipicolinate. Lys-159 (proton donor) is an active-site residue. (S)-2,3,4,5-tetrahydrodipicolinate is bound at residue 165–166 (GT).

Belongs to the DapB family.

It is found in the cytoplasm. It carries out the reaction (S)-2,3,4,5-tetrahydrodipicolinate + NAD(+) + H2O = (2S,4S)-4-hydroxy-2,3,4,5-tetrahydrodipicolinate + NADH + H(+). The catalysed reaction is (S)-2,3,4,5-tetrahydrodipicolinate + NADP(+) + H2O = (2S,4S)-4-hydroxy-2,3,4,5-tetrahydrodipicolinate + NADPH + H(+). The protein operates within amino-acid biosynthesis; L-lysine biosynthesis via DAP pathway; (S)-tetrahydrodipicolinate from L-aspartate: step 4/4. Functionally, catalyzes the conversion of 4-hydroxy-tetrahydrodipicolinate (HTPA) to tetrahydrodipicolinate. This Pseudomonas putida (strain W619) protein is 4-hydroxy-tetrahydrodipicolinate reductase.